The chain runs to 218 residues: Kynurenine formamidase (218 aa).

Tryptophan 27 contributes to the substrate binding site. Zn(2+) is bound by residues histidine 57, histidine 61, and aspartate 63. Residue histidine 67 is the Proton donor/acceptor of the active site. Zn(2+) contacts are provided by histidine 169 and glutamate 181.

Belongs to the Cyclase 1 superfamily. KynB family. As to quaternary structure, homodimer. Zn(2+) is required as a cofactor.

The enzyme catalyses N-formyl-L-kynurenine + H2O = L-kynurenine + formate + H(+). It participates in amino-acid degradation; L-tryptophan degradation via kynurenine pathway; L-kynurenine from L-tryptophan: step 2/2. Inhibited by EDTA. Insensitive to phenylmethylsulfonyl fluoride (PMSF). Functionally, catalyzes the hydrolysis of N-formyl-L-kynurenine to L-kynurenine, the second step in the kynurenine pathway of tryptophan degradation. The polypeptide is Kynurenine formamidase (Cupriavidus metallidurans (strain ATCC 43123 / DSM 2839 / NBRC 102507 / CH34) (Ralstonia metallidurans)).